The primary structure comprises 394 residues: Elongation factor Tu (394 aa).

The region spanning 10–204 is the tr-type G domain; sequence KEHVNVGTIG…AVDTYIENPV (195 aa). The segment at 19–26 is G1; the sequence is GHVDHGKT. 19–26 provides a ligand contact to GTP; the sequence is GHVDHGKT. Threonine 26 serves as a coordination point for Mg(2+). The segment at 60 to 64 is G2; it reads GITIN. Residues 81–84 form a G3 region; that stretch reads DCPG. Residues 81 to 85 and 136 to 139 contribute to the GTP site; these read DCPGH and NKCD. The tract at residues 136–139 is G4; sequence NKCD. Residues 174–176 form a G5 region; that stretch reads SAL.

The protein belongs to the TRAFAC class translation factor GTPase superfamily. Classic translation factor GTPase family. EF-Tu/EF-1A subfamily. Monomer.

It localises to the cytoplasm. The enzyme catalyses GTP + H2O = GDP + phosphate + H(+). Its function is as follows. GTP hydrolase that promotes the GTP-dependent binding of aminoacyl-tRNA to the A-site of ribosomes during protein biosynthesis. The polypeptide is Elongation factor Tu (Mycoplasmopsis synoviae (strain 53) (Mycoplasma synoviae)).